The following is a 186-amino-acid chain: Interferon lambda-3 (186 aa).

A signal peptide spans 1-21 (MVCYGVTIILVGTLGSLLVGA). 3 disulfide bridges follow: cysteine 31/cysteine 128, cysteine 65/cysteine 160, and cysteine 178/cysteine 185.

This sequence belongs to the lambda interferon family.

The protein localises to the secreted. Cytokine which plays a critical role in the antiviral host defense, predominantly in the epithelial tissues. Acts as a ligand for the heterodimeric class II cytokine receptor composed of IL10RB and IFNLR1, and receptor engagement leads to the activation of the JAK/STAT signaling pathway resulting in the expression of IFN-stimulated genes (ISG), which mediate the antiviral state. Has a restricted receptor distribution and therefore restricted targets: is primarily active in epithelial cells and this cell type-selective action is because of the epithelial cell-specific expression of its receptor IFNLR1. Exhibits antiviral activity against the H5N1 influenza A virus. Induces the expression of the antiviral MX protein in epithelial-rich tissues, such as intestine, trachea and lung. The sequence is that of Interferon lambda-3 (IFNL3) from Gallus gallus (Chicken).